A 369-amino-acid polypeptide reads, in one-letter code: Zeaxanthin 7,8(7',8')-cleavage dioxygenase, chromoplastic (369 aa).

Residues H62, H112, H177, and H356 each coordinate Fe cation.

Belongs to the carotenoid oxygenase family. Fe(2+) serves as cofactor. As to expression, in the style branches.

Its subcellular location is the plastid. It is found in the chromoplast. The catalysed reaction is all-trans-zeaxanthin + 2 O2 = crocetin dialdehyde + 2 3beta-hydroxy-beta-cyclocitral. Functionally, cleaves zeaxanthin symmetrically at the 7-8 and 7'-8' double bonds to produce crocetin dialdehyde and hydroxy-beta-cyclocitral, two water-soluble precursors sequestred in vacuoles and involved in the synthesis of saffron pigment and aroma. This chain is Zeaxanthin 7,8(7',8')-cleavage dioxygenase, chromoplastic (ZCD), found in Crocus sativus (Saffron).